A 586-amino-acid polypeptide reads, in one-letter code: MKAIIEYLLKQALINLQQSGEMPIDLEIEIKVENAKDPAHGDYATNLALVLAKPCRQAPKVLAERLVAVIPSDPSVEKIEIAGAGFINFFMRNTARSLIISEILNKGKEFGRGNLGQSQKVLIEFVSANPTGPLHVGHGRGAAFGATLGNVLKAAGYDVTLEYYVNDAGRQMNILAVSVWLRYLELAGEPIVFPANGYKGQYVYEIAQEMWSEQGNQFVHPWISVVENLPADEPEGGDKETYIDAIIARAQSLLGKDGFANFHQHALKTVLDDIKDDLQAFGVRFDSWFSEQSLFEDGSIEKGIQALKDRGHTYEREGALWFRATDFGDEKDRVLVRANGQTTYFASDVAYHWNKYDRGFDRVIDIFGADHHGYVTRIKTAVKALGHDESALDVILVQFAILYRGGDRVQMSTRSGSFVTLRELREEVGNDAARYFYVARKPEQHMDFDLDLAKSESSDNPVYYIQYAHARICSVLRQLKERGLKWDKDMGLKNLDLLEQQHETTLISLIARYPEVIQSAAASCEPHQLAYYLRELANGLHSYYNAIQLLCEQEQLRCARLCLLESVRQVLNNGLAILGVSAPESM.

The 'HIGH' region signature appears at 128 to 138 (ANPTGPLHVGH).

It belongs to the class-I aminoacyl-tRNA synthetase family. As to quaternary structure, monomer.

Its subcellular location is the cytoplasm. The enzyme catalyses tRNA(Arg) + L-arginine + ATP = L-arginyl-tRNA(Arg) + AMP + diphosphate. This is Arginine--tRNA ligase from Legionella pneumophila (strain Corby).